The primary structure comprises 503 residues: MEVRKALTCVFLTVFLCSGDAQDSVTDSVLNCCEGDVLFLLDSSGSVASYEFSRMVDFLSELLLPFSLGPDHVRVGLLQVGTEPHLEFGFDAYSSQQGLQAALERTKQLKGDTNTVEALLMARAQVLRVGVPGGARPDLPRVLVWLTDGVDPGNVQEPMARLRDEGVAVLVVSTGHGNYQVLREVVSPPTEEHLFFVDIDDISIIGEDLRNSIIEIIRAERLQVKSVSSTSAQLEWRPVLSGSGSGYYDIKFGPMRTGQIPGVPGGASTDPGSFQRITRPADSSSAQLTGLRPDTTYTVTLTPKNNQQVLNTLQTSFTTQTVNPPEPQIQLLSSLSVSESSSNSVRVSWAPLLPRLIQEYQLEYSALPSGPLRVLRVSNTHNSTVITDLQPDTQYLLTVSAKQTSGKERAMTVKVCTQEVLPALSDLQLSSVGDETVQLRWKGSFDGLRGYWVTWERGHSQRSTLYLPPNRLSTTLNHVPSRARVCVSPVYRTARGEGLCCTA.

A signal peptide spans 1–21 (MEVRKALTCVFLTVFLCSGDA). Residues 36–213 (DVLFLLDSSG…IIGEDLRNSI (178 aa)) form the VWFA domain. Fibronectin type-III domains follow at residues 218 to 324 (RAER…TVNP) and 331 to 423 (LLSS…VLPA).

As to quaternary structure, homodimer or homomultimer; disulfide-linked.

It is found in the secreted. The protein localises to the extracellular space. It localises to the extracellular matrix. Its subcellular location is the basement membrane. Functionally, promotes matrix assembly. Involved in the organization of skeletal muscles and in the formation of neuromuscular junctions. In Danio rerio (Zebrafish), this protein is von Willebrand factor A domain-containing protein 1.